The primary structure comprises 112 residues: Putative pterin-4-alpha-carbinolamine dehydratase (112 aa).

The protein belongs to the pterin-4-alpha-carbinolamine dehydratase family.

It catalyses the reaction (4aS,6R)-4a-hydroxy-L-erythro-5,6,7,8-tetrahydrobiopterin = (6R)-L-erythro-6,7-dihydrobiopterin + H2O. The polypeptide is Putative pterin-4-alpha-carbinolamine dehydratase (Photobacterium profundum (strain SS9)).